Consider the following 417-residue polypeptide: NADH-quinone oxidoreductase subunit D (417 aa).

Belongs to the complex I 49 kDa subunit family. In terms of assembly, NDH-1 is composed of 14 different subunits. Subunits NuoB, C, D, E, F, and G constitute the peripheral sector of the complex.

It localises to the cell inner membrane. It carries out the reaction a quinone + NADH + 5 H(+)(in) = a quinol + NAD(+) + 4 H(+)(out). NDH-1 shuttles electrons from NADH, via FMN and iron-sulfur (Fe-S) centers, to quinones in the respiratory chain. The immediate electron acceptor for the enzyme in this species is believed to be ubiquinone. Couples the redox reaction to proton translocation (for every two electrons transferred, four hydrogen ions are translocated across the cytoplasmic membrane), and thus conserves the redox energy in a proton gradient. The protein is NADH-quinone oxidoreductase subunit D of Janthinobacterium sp. (strain Marseille) (Minibacterium massiliensis).